The sequence spans 959 residues: Bifunctional premutilin synthase (959 aa).

Positions 1–542 (MGLSEDLHAR…ALNVPIPRFD (542 aa)) are class II diterpene cyclase. The DXDD motif signature appears at 309 to 312 (DADM). Catalysis depends on Asp311, which acts as the For class II diterpene cyclase activity. A class I diterpene synthase region spans residues 543–959 (PASITTLPPI…TANGSNGIHH (417 aa)). The For class I diterpene synthase activity role is filled by Asp649. 3 residues coordinate Mg(2+): Asp649, Asp653, and Asn824. The short motif at 649–653 (DDYLD) is the DDXXD motif element. Residues 931–959 (KGANGVKKTNGLTTNGTKATANGSNGIHH) form a disordered region. Residues 934–959 (NGVKKTNGLTTNGTKATANGSNGIHH) are compositionally biased toward low complexity.

This sequence belongs to the terpene synthase family. The cofactor is Mg(2+).

Its pathway is secondary metabolite biosynthesis; terpenoid biosynthesis. Bifunctional premutilin synthase; part of the gene cluster that mediates the biosynthesis of pleuromutilin, a tricyclic diterpene showing antibacterial properties. The geranylgeranyl diphosphate (GGPP) synthase ple4 catalyzes the first step in pleuromutilin biosynthesis. GGPP is then substrate of the premutilin synthase (PS) ple3 to yield premutilin. Premutilin synthase is a bifunctional enzyme composed of the fusion of a class II diterpene cyclase (DTC) and a class I diterpene synthase (DTS), with the corresponding domains and active sites containing characteristic aspartate-rich motifs. GGPP is first converted to mutildienyl-diphosphate (MPP) at the class II DTC site. MPP is subsequently further cyclized at the class I DTS site, followed by a 1,5-hydride shift and addition of water prior to terminating deprotonation, to yield premutilin. The cytochrome P450 monooxygenases ple5 and ple6 hydroxylate premutilin at C-11 and C-3, respectively, producing 11-hydroxypremutilin and 3-hydroxypremutilin. The combination of the actions of both ple5 and ple6 leads to the production of 3,11-dihydroxypremutilin. The short chain dehydrogenase ple7 further converts 3,11-dihydroxypremutilin into mutilin. The acetyltransferase ple2 then acetylates mutilin to produce 14-O-acetylmutilin. Finally, the cytochrome P450 monooxygenase ple1 catalyzes hydroxylation on the alpha position of the acetyl side chain of 14-O-acetylmutilin to yield pleuromutilin. This chain is Bifunctional premutilin synthase, found in Rhodocybe pseudopiperita (Clitopilus pseudopiperitus).